The primary structure comprises 202 residues: Protein phosphatase 1 regulatory subunit 1B (202 aa).

An N-acetylmethionine modification is found at M1. Positions 1 to 202 (MDPKDRKKIQ…QRPAHPEPGT (202 aa)) are disordered. Position 34 is a phosphothreonine; by PKA (T34). Residues 41–63 (LSEHSSPEEEASPHQRASGEGHH) show a composition bias toward basic and acidic residues. S45 and S46 each carry phosphoserine. Phosphothreonine; by CDK5 is present on T75. Over residues 89–100 (HLQSISNLGENQ) the composition is skewed to polar residues. S102 is subject to Phosphoserine. The span at 109 to 118 (GELRELGYPR) shows a compositional bias: basic and acidic residues. The span at 119–136 (EEEEEEEEEDEEEEEDSQ) shows a compositional bias: acidic residues. S135 bears the Phosphoserine mark. Over residues 191–202 (EPQRPAHPEPGT) the composition is skewed to basic and acidic residues.

The protein belongs to the protein phosphatase inhibitor 1 family. Dopamine- and cyclic AMP-regulated neuronal phosphoprotein. Post-translationally, phosphorylation of Thr-34 is required for activity.

It localises to the cytoplasm. Inhibitor of protein-phosphatase 1. This Bos taurus (Bovine) protein is Protein phosphatase 1 regulatory subunit 1B (PPP1R1B).